The following is a 521-amino-acid chain: Membrane-bound transcription factor site-2 protease (521 aa).

Over 1–3 (MIP) the chain is Cytoplasmic. Residues 4 to 24 (VSLVVVVVGGWTVVYLTDLVL) traverse the membrane as a helical segment. The Lumenal portion of the chain corresponds to 25-74 (KSSVYFKHSYEDWLESNGLSISPFHIRWQTAVFNRAFYSWGRRKARMLYQ). 2 helical membrane passes run 75–95 (WFNF…FLLG) and 96–107 (KTLMQTLAQMMA). At 108 to 146 (DSPSSYSSSSSSSSSSSSSSSSSSSSSSSSSLHNEQVLQ) the chain is on the lumenal side. Residues 113–137 (YSSSSSSSSSSSSSSSSSSSSSSSS) are disordered. A helical transmembrane segment spans residues 147 to 171 (VVVPGINLPVNQLTYFFAAVLISGV). Histidine 173 contacts Zn(2+). Residue glutamate 174 is part of the active site. The next 3 helical transmembrane spans lie at 176–188 (GHGI…QVRF), 189–211 (NGFG…TTHL), and 231–253 (FVLA…PFYY). A Zn(2+)-binding site is contributed by histidine 177. Over 254–448 (TGVGVLITEV…LPVVVETFVK (195 aa)) the chain is Lumenal. N-linked (GlcNAc...) asparagine glycosylation occurs at asparagine 339. 2 helical membrane-spanning segments follow: residues 449 to 466 (YLIS…VPCF) and 467 to 478 (ALDGQWILNSFL). The Lumenal portion of the chain corresponds to 479-494 (DATLTSVIGDNDVKDL). Residues 495 to 515 (IGFFILLGGSVLLAANVTLGL) traverse the membrane as a helical segment. Residues 516 to 521 (WMVTAR) lie on the Cytoplasmic side of the membrane.

This sequence belongs to the peptidase M50A family. It depends on Zn(2+) as a cofactor.

The protein localises to the membrane. It is found in the cytoplasm. Its subcellular location is the golgi apparatus membrane. The catalysed reaction is Cleaves several transcription factors that are type-2 transmembrane proteins within membrane-spanning domains. Known substrates include sterol regulatory element-binding protein (SREBP) -1, SREBP-2 and forms of the transcriptional activator ATF6. SREBP-2 is cleaved at the site 477-DRSRILL-|-CVLTFLCLSFNPLTSLLQWGGA-505. The residues Asn-Pro, 11 residues distal to the site of cleavage in the membrane-spanning domain, are important for cleavage by S2P endopeptidase. Replacement of either of these residues does not prevent cleavage, but there is no cleavage if both of these residues are replaced.. Functionally, zinc metalloprotease that mediates intramembrane proteolysis of proteins such as ATF6, ATF6B, SREBF1/SREBP1 and SREBF2/SREBP2. Catalyzes the second step in the proteolytic activation of the sterol regulatory element-binding proteins (SREBPs) SREBF1/SREBP1 and SREBF2/SREBP2: cleaves SREBPs within the first transmembrane segment, thereby releasing the N-terminal segment with a portion of the transmembrane segment attached. Mature N-terminal SREBP fragments shuttle to the nucleus and activate gene transcription. Also mediates the second step in the proteolytic activation of the cyclic AMP-dependent transcription factor ATF-6 (ATF6 and ATF6B). Involved in intramembrane proteolysis during bone formation. In astrocytes and osteoblasts, upon DNA damage and ER stress, mediates the second step of the regulated intramembrane proteolytic activation of the transcription factor CREB3L1, leading to the inhibition of cell-cycle progression. This is Membrane-bound transcription factor site-2 protease (MBTPS2) from Pongo abelii (Sumatran orangutan).